We begin with the raw amino-acid sequence, 249 residues long: Probable transcriptional regulatory protein LBJ_0543 (249 aa).

This sequence belongs to the TACO1 family.

The protein resides in the cytoplasm. The sequence is that of Probable transcriptional regulatory protein LBJ_0543 from Leptospira borgpetersenii serovar Hardjo-bovis (strain JB197).